A 517-amino-acid chain; its full sequence is ATP synthase subunit alpha (517 aa).

Residue 174 to 181 coordinates ATP; sequence GDRQTGKT.

Belongs to the ATPase alpha/beta chains family. F-type ATPases have 2 components, CF(1) - the catalytic core - and CF(0) - the membrane proton channel. CF(1) has five subunits: alpha(3), beta(3), gamma(1), delta(1), epsilon(1). CF(0) has four main subunits: a(1), b(1), b'(1) and c(9-12).

It is found in the cell inner membrane. It carries out the reaction ATP + H2O + 4 H(+)(in) = ADP + phosphate + 5 H(+)(out). Its function is as follows. Produces ATP from ADP in the presence of a proton gradient across the membrane. The alpha chain is a regulatory subunit. This Methylibium petroleiphilum (strain ATCC BAA-1232 / LMG 22953 / PM1) protein is ATP synthase subunit alpha.